The chain runs to 273 residues: Glutamate 5-kinase (273 aa).

Lys-15 is a binding site for ATP. The substrate site is built by Ser-55, Asp-142, and Asn-158. ATP contacts are provided by residues 178–179 (SD) and 220–226 (TGGMLSK).

The protein belongs to the glutamate 5-kinase family.

It localises to the cytoplasm. It catalyses the reaction L-glutamate + ATP = L-glutamyl 5-phosphate + ADP. The protein operates within amino-acid biosynthesis; L-proline biosynthesis; L-glutamate 5-semialdehyde from L-glutamate: step 1/2. Catalyzes the transfer of a phosphate group to glutamate to form L-glutamate 5-phosphate. This chain is Glutamate 5-kinase, found in Streptococcus pyogenes serotype M18 (strain MGAS8232).